The primary structure comprises 360 residues: UPF0324 membrane protein plu2856 (360 aa).

The next 9 membrane-spanning stretches (helical) occupy residues 20 to 42, 47 to 69, 104 to 126, 136 to 155, 167 to 189, 239 to 256, 277 to 299, 304 to 326, and 333 to 355; these read LIPG…NIPW, GLGT…YPLL, VGIT…AIWL, QTVI…AIMA, VAVA…PWFY, MIRV…SRYI, WFAV…AAIV, NIDT…VSAI, and PILL…NLGI.

This sequence belongs to the UPF0324 family.

The protein localises to the cell membrane. This Photorhabdus laumondii subsp. laumondii (strain DSM 15139 / CIP 105565 / TT01) (Photorhabdus luminescens subsp. laumondii) protein is UPF0324 membrane protein plu2856.